An 86-amino-acid polypeptide reads, in one-letter code: Large ribosomal subunit protein bL31B (86 aa).

Belongs to the bacterial ribosomal protein bL31 family. Type B subfamily. Part of the 50S ribosomal subunit.

This is Large ribosomal subunit protein bL31B from Burkholderia lata (strain ATCC 17760 / DSM 23089 / LMG 22485 / NCIMB 9086 / R18194 / 383).